The chain runs to 391 residues: Phosphoglycerate kinase (391 aa).

Substrate contacts are provided by residues D21–N23, R36, H59–R62, R113, and R146. ATP-binding positions include K197, E319, and G345–T348.

It belongs to the phosphoglycerate kinase family. Monomer.

It localises to the cytoplasm. It carries out the reaction (2R)-3-phosphoglycerate + ATP = (2R)-3-phospho-glyceroyl phosphate + ADP. It functions in the pathway carbohydrate degradation; glycolysis; pyruvate from D-glyceraldehyde 3-phosphate: step 2/5. This Shewanella denitrificans (strain OS217 / ATCC BAA-1090 / DSM 15013) protein is Phosphoglycerate kinase.